A 373-amino-acid polypeptide reads, in one-letter code: Flagellar P-ring protein (373 aa).

Residues 1 to 26 (MRLLFRFLTLVAVLAMSLADVAPAWA) form the signal peptide.

Belongs to the FlgI family. In terms of assembly, the basal body constitutes a major portion of the flagellar organelle and consists of four rings (L,P,S, and M) mounted on a central rod.

Its subcellular location is the periplasm. It is found in the bacterial flagellum basal body. Its function is as follows. Assembles around the rod to form the L-ring and probably protects the motor/basal body from shearing forces during rotation. The chain is Flagellar P-ring protein from Rhizobium etli (strain CIAT 652).